The chain runs to 206 residues: Transmembrane emp24 domain-containing protein bai (206 aa).

An N-terminal signal peptide occupies residues 1–17 (MAKATFFYFLFIGYVWP). Residues 18–172 (IDSVMFNLAP…RDTNEKTNSR (155 aa)) lie on the Lumenal side of the membrane. The GOLD domain maps to 30–140 (QKCLKEDIQA…LKPLEVDLKR (111 aa)). The chain crosses the membrane as a helical span at residues 173–193 (VLFFSIFSMCCLLGLATWQVL). Topologically, residues 194-206 (YLRRYFKAKKLIE) are cytoplasmic.

Belongs to the EMP24/GP25L family.

Its subcellular location is the membrane. In terms of biological role, eca and bai are essential, though not redundant, for dorsoventral patterning of the embryo. Specifically required during early embryogenesis for the activity of maternal tkv, while the zygotic tkv is not affected. This Drosophila persimilis (Fruit fly) protein is Transmembrane emp24 domain-containing protein bai.